Here is a 344-residue protein sequence, read N- to C-terminus: Cycloartenol-C-24-methyltransferase 1 (344 aa).

This sequence belongs to the class I-like SAM-binding methyltransferase superfamily. Erg6/SMT family.

It catalyses the reaction zymosterol + S-adenosyl-L-methionine = fecosterol + S-adenosyl-L-homocysteine + H(+). It participates in steroid biosynthesis; sterol biosynthesis. Catalyzes the methyl transfer from S-adenosyl-methionine to the C-24 of cycloartenol to form 24-methylene cycloartenol. The chain is Cycloartenol-C-24-methyltransferase 1 (Smt1-1) from Oryza sativa subsp. japonica (Rice).